The following is a 356-amino-acid chain: Dihydroorotate dehydrogenase (quinone) (356 aa).

Residues 66–70 and Thr90 contribute to the FMN site; that span reads AGFDK. A substrate-binding site is contributed by Lys70. Position 115 to 119 (115 to 119) interacts with substrate; it reads NRMGF. Residues Asn143 and Asn176 each contribute to the FMN site. Asn176 provides a ligand contact to substrate. Ser179 serves as the catalytic Nucleophile. Asn181 contacts substrate. FMN is bound by residues Lys212 and Thr240. Residue 241-242 participates in substrate binding; that stretch reads NT. FMN is bound by residues Gly266, Gly295, and 316–317; that span reads YT.

The protein belongs to the dihydroorotate dehydrogenase family. Type 2 subfamily. In terms of assembly, monomer. FMN is required as a cofactor.

Its subcellular location is the cell membrane. It carries out the reaction (S)-dihydroorotate + a quinone = orotate + a quinol. Its pathway is pyrimidine metabolism; UMP biosynthesis via de novo pathway; orotate from (S)-dihydroorotate (quinone route): step 1/1. In terms of biological role, catalyzes the conversion of dihydroorotate to orotate with quinone as electron acceptor. This Rhodococcus opacus (strain B4) protein is Dihydroorotate dehydrogenase (quinone).